Here is a 353-residue protein sequence, read N- to C-terminus: Chemerin-like receptor 2 (353 aa).

The Extracellular segment spans residues 1–41; that stretch reads MEVSKEMLFEELDNYSYALDYYSQESDPEEKVYLGLVHWIS. Asn14 carries N-linked (GlcNAc...) asparagine glycosylation. Residues 42-62 traverse the membrane as a helical segment; sequence LFLYALAFVLGIPGNAIVIWL. Residues 63-73 are Cytoplasmic-facing; sequence MGFKWKKTVTT. A helical transmembrane segment spans residues 74–94; sequence LWFLNLAIADFIFVLFLPLYI. The Extracellular segment spans residues 95-112; it reads SYVALSFHWPFGLWLCKV. Cys110 and Cys187 are disulfide-bonded. Residues 113 to 133 form a helical membrane-spanning segment; that stretch reads NSFIAQLNMFSSVFFLTVISL. Topologically, residues 134–154 are cytoplasmic; that stretch reads DRYIHLLHPGLSHRHRTLKSS. The chain crosses the membrane as a helical span at residues 155–175; it reads LVVVILVWLLASLLGGPTLYF. The Extracellular segment spans residues 176–210; it reads RDTMEVNNHIICYNNFQEHELTLMRHHVLTWVKFL. A helical transmembrane segment spans residues 211–231; that stretch reads FGYLFPLLTMSSCYLCLIFKM. At 232-247 the chain is on the cytoplasmic side; the sequence is KKRNILISRKHLWMIL. The chain crosses the membrane as a helical span at residues 248–268; it reads SVVIAFLVCWTPYHLFSIWEL. At 269–286 the chain is on the extracellular side; it reads SIHHNSSFQNVLQGGIPL. The helical transmembrane segment at 287–307 threads the bilayer; that stretch reads STGLAFLNSCLNPILYVLISK. Topologically, residues 308–353 are cytoplasmic; that stretch reads TFQARFRASVAEVLKRSLWEASCSGTVSEQLRSAETKSLSLLETAQ.

It belongs to the chemokine-like receptor (CMKLR) family. High expressed in white adipose tissue and skeletal muscle. Expressed in hippocampus and cortex.

It is found in the cell membrane. Functionally, receptor for chemoattractant adipokine chemerin/RARRES2 suggesting a role for this receptor in the regulation of inflammation and energy homesotasis. Signals mainly via beta-arrestin pathway. Binding of RARRES2 activates weakly G proteins, calcium mobilization and MAPK1/MAPK3 (ERK1/2) phosphorylation too. Acts also as a receptor for TAFA1, mediates its effects on neuronal stem-cell proliferation and differentiation via the activation of ROCK/ERK and ROCK/STAT3 signaling pathway. In Mus musculus (Mouse), this protein is Chemerin-like receptor 2 (Cmklr2).